The following is a 419-amino-acid chain: Carboxypeptidase A1 (419 aa).

An N-terminal signal peptide occupies residues 1 to 16 (MRGLLVLSVLLGAVFG). Positions 17–110 (KEDFVGHQVL…QEQMFAFRSR (94 aa)) are cleaved as a propeptide — activation peptide. In terms of domain architecture, Peptidase M14 spans 121-414 (TYHTLEEIYD…LALLTIMEHT (294 aa)). Residues histidine 179 and glutamate 182 each coordinate Zn(2+). Residues 179–182 (HSRE), arginine 237, and 254–255 (NR) contribute to the substrate site. Cysteine 248 and cysteine 271 are disulfide-bonded. Histidine 306 provides a ligand contact to Zn(2+). Residues 307–308 (SY) and tyrosine 358 each bind substrate. Glutamate 380 (proton donor/acceptor) is an active-site residue.

It belongs to the peptidase M14 family. As to quaternary structure, monomer. May form a complex with proelastase 2. The cofactor is Zn(2+).

Its subcellular location is the secreted. The catalysed reaction is Release of a C-terminal amino acid, but little or no action with -Asp, -Glu, -Arg, -Lys or -Pro.. It carries out the reaction leukotriene C4 + H2O = leukotriene F4 + glycine. Its activity is regulated as follows. Inhibited by interaction with the S.magnifica carboxypeptidase inhibitor SmCI. Functionally, carboxypeptidase that catalyzes the release of a C-terminal amino acid, but has little or no action with -Asp, -Glu, -Arg, -Lys or -Pro. Catalyzes the conversion of leukotriene C4 to leukotriene F4 via the hydrolysis of an amide bond. In Homo sapiens (Human), this protein is Carboxypeptidase A1.